The sequence spans 183 residues: ATP synthase subunit b, chloroplastic (183 aa).

Residues 25–45 form a helical membrane-spanning segment; it reads DILATNLINLTVVVGVLIFFG.

The protein belongs to the ATPase B chain family. As to quaternary structure, F-type ATPases have 2 components, F(1) - the catalytic core - and F(0) - the membrane proton channel. F(1) has five subunits: alpha(3), beta(3), gamma(1), delta(1), epsilon(1). F(0) has four main subunits: a(1), b(1), b'(1) and c(10-14). The alpha and beta chains form an alternating ring which encloses part of the gamma chain. F(1) is attached to F(0) by a central stalk formed by the gamma and epsilon chains, while a peripheral stalk is formed by the delta, b and b' chains.

The protein localises to the plastid. It localises to the chloroplast thylakoid membrane. F(1)F(0) ATP synthase produces ATP from ADP in the presence of a proton or sodium gradient. F-type ATPases consist of two structural domains, F(1) containing the extramembraneous catalytic core and F(0) containing the membrane proton channel, linked together by a central stalk and a peripheral stalk. During catalysis, ATP synthesis in the catalytic domain of F(1) is coupled via a rotary mechanism of the central stalk subunits to proton translocation. In terms of biological role, component of the F(0) channel, it forms part of the peripheral stalk, linking F(1) to F(0). The polypeptide is ATP synthase subunit b, chloroplastic (Zea mays (Maize)).